The following is a 206-amino-acid chain: HTH-type transcriptional regulator Hpr (206 aa).

One can recognise an HTH marR-type domain in the interval 13–157 (ALLFSQRMAQ…MMSIIRHIYG (145 aa)). The H-T-H motif DNA-binding region spans 63-86 (ISEIAKFGVMHVSTAFNFSKKLEE). The disordered stretch occupies residues 177–206 (SEEGKMKKKQEAKEAGESIEVDKPLEPLKN). Residues 178–206 (EEGKMKKKQEAKEAGESIEVDKPLEPLKN) show a composition bias toward basic and acidic residues.

Homodimer.

Its function is as follows. Negative regulator of protease production and sporulation. In Bacillus licheniformis (strain ATCC 14580 / DSM 13 / JCM 2505 / CCUG 7422 / NBRC 12200 / NCIMB 9375 / NCTC 10341 / NRRL NRS-1264 / Gibson 46), this protein is HTH-type transcriptional regulator Hpr.